An 862-amino-acid polypeptide reads, in one-letter code: DNA mismatch repair protein MutS (862 aa).

608–615 is a binding site for ATP; that stretch reads GPNMAGKS.

The protein belongs to the DNA mismatch repair MutS family.

Functionally, this protein is involved in the repair of mismatches in DNA. It is possible that it carries out the mismatch recognition step. This protein has a weak ATPase activity. This Bacteroides fragilis (strain YCH46) protein is DNA mismatch repair protein MutS.